We begin with the raw amino-acid sequence, 100 residues long: Large ribosomal subunit protein uL23 (100 aa).

This sequence belongs to the universal ribosomal protein uL23 family. In terms of assembly, part of the 50S ribosomal subunit. Contacts protein L29, and trigger factor when it is bound to the ribosome.

In terms of biological role, one of the early assembly proteins it binds 23S rRNA. One of the proteins that surrounds the polypeptide exit tunnel on the outside of the ribosome. Forms the main docking site for trigger factor binding to the ribosome. The chain is Large ribosomal subunit protein uL23 from Synechococcus sp. (strain CC9902).